A 119-amino-acid polypeptide reads, in one-letter code: NADH-quinone oxidoreductase subunit A (119 aa).

3 consecutive transmembrane segments (helical) span residues 9–29 (VLLF…LGYV), 63–83 (LVAI…PWAV), and 88–108 (VGVT…VGFA).

The protein belongs to the complex I subunit 3 family. In terms of assembly, NDH-1 is composed of 14 different subunits. Subunits NuoA, H, J, K, L, M, N constitute the membrane sector of the complex.

The protein resides in the cell inner membrane. The catalysed reaction is a quinone + NADH + 5 H(+)(in) = a quinol + NAD(+) + 4 H(+)(out). Its function is as follows. NDH-1 shuttles electrons from NADH, via FMN and iron-sulfur (Fe-S) centers, to quinones in the respiratory chain. The immediate electron acceptor for the enzyme in this species is believed to be ubiquinone. Couples the redox reaction to proton translocation (for every two electrons transferred, four hydrogen ions are translocated across the cytoplasmic membrane), and thus conserves the redox energy in a proton gradient. The polypeptide is NADH-quinone oxidoreductase subunit A (Acidovorax sp. (strain JS42)).